The sequence spans 424 residues: MAAEEGKDEAGLDQVEEEFSIWKRNTPFLYDLMISHPLEWPSLTLHWVPSTPIPYSKDPYFAVHKLILGTHTSGGAQDFLMVADVVIPTPDAEPGLGGRDQEPIVPKVEIKQKIRVDGEVNRARCMPQKPTLVGAKTSGSEVFLFDYARLSGKPQTSECDPDLRLMGHEQEGYGLAWSSFKEGYLLSGSQDQRICLWDVSATATDKVLNPMHVYEGHQSIIEDVAWHMKNENIFGSAGDDCQLVIWDLRTNQMQHQVKVHEREINYLSFNPFNEWVLATASSDSTVALFDLRKLTAPLHVLSKHEGEVFQVEWDPNHETVLASSGEDRRLMVWDINRVGDEQLEIELDAEDGPPELLFSHGGHKAKISDFAWNKDEPWVISSVAEDNSLQVWQMAESIYREDDEDEDDDDEGNQNAQHSNENQK.

Residue methionine 1 is modified to N-acetylmethionine. WD repeat units lie at residues 167–207, 216–256, 259–299, 303–343, and 362–402; these read GHEQ…TDKV, GHQS…MQHQ, VHER…APLH, KHEG…DEQL, and GHKA…YRED. Residues 233–249 carry the DWD box motif; that stretch reads IFGSAGDDCQLVIWDLR. The interval 394–424 is disordered; that stretch reads MAESIYREDDEDEDDDDEGNQNAQHSNENQK. Positions 401–412 are enriched in acidic residues; the sequence is EDDEDEDDDDEG. Over residues 413-424 the composition is skewed to polar residues; it reads NQNAQHSNENQK.

It belongs to the WD repeat RBAP46/RBAP48/MSI1 family.

The protein resides in the nucleus. Functionally, core histone-binding subunit that may target chromatin assembly factors, chromatin remodeling factors and histone deacetylases to their histone substrates in a manner that is regulated by nucleosomal DNA. The protein is WD-40 repeat-containing protein MSI3 (MSI3) of Arabidopsis thaliana (Mouse-ear cress).